The following is a 405-amino-acid chain: Argininosuccinate synthase (405 aa).

Residues 11 to 19 and Ala38 contribute to the ATP site; that span reads AYSGGLDTS. Residues Tyr91 and Ser96 each coordinate L-citrulline. Gly121 contributes to the ATP binding site. Thr123, Asn127, and Asp128 together coordinate L-aspartate. Position 127 (Asn127) interacts with L-citrulline. L-citrulline-binding residues include Arg131, Ser182, Ser191, Glu267, and Tyr279.

Belongs to the argininosuccinate synthase family. Type 1 subfamily. Homotetramer.

The protein resides in the cytoplasm. The enzyme catalyses L-citrulline + L-aspartate + ATP = 2-(N(omega)-L-arginino)succinate + AMP + diphosphate + H(+). It functions in the pathway amino-acid biosynthesis; L-arginine biosynthesis; L-arginine from L-ornithine and carbamoyl phosphate: step 2/3. This Sphingopyxis alaskensis (strain DSM 13593 / LMG 18877 / RB2256) (Sphingomonas alaskensis) protein is Argininosuccinate synthase.